Here is a 729-residue protein sequence, read N- to C-terminus: Golgin subfamily A member 5 (729 aa).

The residue at position 2 (Ser2) is an N-acetylserine. The Cytoplasmic segment spans residues 2-696 (SWFADLAGRA…IFLRRYPIAR (695 aa)). 2 positions are modified to dimethylated arginine: Arg27 and Arg89. 2 disordered regions span residues 89 to 222 (RTVG…SQEL) and 626 to 645 (SASSGPNSGSAINMSGVDSG). Ser116 is subject to Phosphoserine. Basic and acidic residues predominate over residues 134 to 146 (PTGRVEVKKEKGR). Low complexity predominate over residues 148–167 (PVSPSSPSGVSSVNTSVTTT). 2 stretches are compositionally biased toward polar residues: residues 175 to 186 (GSQSPGVNSSDS) and 626 to 638 (SASSGPNSGSAIN). Positions 215–629 (GSSRSQELSN…LEQQVHSASS (415 aa)) form a coiled coil. A helical; Anchor for type IV membrane protein membrane pass occupies residues 697–717 (VFVIIYMALLHLWVMIVLLTY). Residues 718–729 (SPEMHHDQPYGK) lie on the Lumenal side of the membrane.

In terms of assembly, homodimer. Interacts with RAB1A that has been activated by GTP-binding. Interacts with isoform CASP of CUX1. In terms of processing, highly phosphorylated during mitosis. Phosphorylation is barely detectable during interphase.

It is found in the golgi apparatus membrane. Its function is as follows. Involved in maintaining Golgi structure. Stimulates the formation of Golgi stacks and ribbons. Involved in intra-Golgi retrograde transport. The protein is Golgin subfamily A member 5 (Golga5) of Mus musculus (Mouse).